We begin with the raw amino-acid sequence, 300 residues long: Ribosomal protein L11 methyltransferase (300 aa).

S-adenosyl-L-methionine is bound by residues Thr-147, Gly-168, Asp-190, and Asn-236.

Belongs to the methyltransferase superfamily. PrmA family.

The protein localises to the cytoplasm. The catalysed reaction is L-lysyl-[protein] + 3 S-adenosyl-L-methionine = N(6),N(6),N(6)-trimethyl-L-lysyl-[protein] + 3 S-adenosyl-L-homocysteine + 3 H(+). Its function is as follows. Methylates ribosomal protein L11. This chain is Ribosomal protein L11 methyltransferase, found in Leptospira borgpetersenii serovar Hardjo-bovis (strain JB197).